The sequence spans 1127 residues: Ras guanine nucleotide exchange factor F (1127 aa).

2 disordered regions span residues 1-82 (MTDK…SLLN) and 96-154 (NSGG…SSSS). Low complexity-rich tracts occupy residues 23–53 (NQPS…TTSP) and 67–82 (NNNN…SLLN). A compositionally biased stretch (polar residues) spans 122-132 (RTSTTLAQFSG). A compositionally biased stretch (low complexity) spans 133-154 (SSLPNTENSSPPPSSSLISSSS). Kelch repeat units lie at residues 212-261 (GFYL…LYNN), 262-311 (SMYI…VESG), 313-366 (MIVF…MHKG), 367-418 (NMYV…LFQD), and 420-469 (IFIS…VKGN). Residues 557-589 (SHQFVLQLIMEYLERNTYHKVIAAIQKESGVLH) enclose the LisH domain. The region spanning 673–804 (NKVQIKAATF…KLRELKKKLQ (132 aa)) is the N-terminal Ras-GEF domain. The Ras-GEF domain maps to 835–1062 (DELEIARQMT…YDLNLLSESL (228 aa)). Positions 1090–1127 (LGSARELNNSNRDSNNITGSSSNNNSNSSNSLSPIVKL) are disordered. The span at 1103 to 1127 (SNNITGSSSNNNSNSSNSLSPIVKL) shows a compositional bias: low complexity.

Promotes the exchange of Ras-bound GDP by GTP. The polypeptide is Ras guanine nucleotide exchange factor F (gefF) (Dictyostelium discoideum (Social amoeba)).